The sequence spans 1957 residues: MSNQSSSGSNTSDLDEESASSLVSSAASPFIDSDLETPRPNISRASTGQLAEDGDTSSQHEDSSEELKRQEVRGMRRHSDLSIDAKLGSSEGSTASSALPLTPRSPSNASWLLVRGGLLDSPILDINSVTQKSNLLNELKQVRSKLAALEHENGILSLQLSSSNKKDKNTSSVTTLTSEEDVSYFQKKLTNMESNFSAKQSEAYDLSRQLLTVTEKLDKKEKDYEKIKEDVSSIKASLAEEQASNKSLRGEQERLEKLLVSSNKTVSTLRQTENSLRAECKTLQEKLEKCAINEEDSKLLEELKHNVANYSDAIVHKDKLIEDLSTRISEFDNLKSERDTLSIKNEKLEKLLRNTIGSLKDSRTSNSQLEEEMVELKESNRTIHSQLTDAESKLSSFEQENKSLKGSIDEYQNNLSSKDKMVKQVSSQLEEARSSLAHATGKLAEINSERDFQNKKIKDFEKIEQDLRACLNSSSNELKEKSALIDKKDQELNNLREQIKEQKKVSESTQSSLQSLQRDILNEKKKHEVYESQLNELKGELQTEISNSEHLSSQLSTLAAEKEAAVATNNELSESKNSLQTLCNAFQEKLAKSVMQLKENEQNFSSLDTSFKKLNESHQELENNHQTITKQLKDTSSKLQQLQLERANFEQKESTLSDENNDLRTKLLKLEESNKSLIKKQEDVDSLEKNIQTLKEDLRKSEEALRFSKLEAKNLREVIDNLKGKHETLEAQRNDLHSSLSDAKNTNAILSSELTKSSEDVKRLTANVETLTQDSKAMKQSFTSLVNSYQSISNLYHELRDDHVNMQSQNNTLLESESKLKTDCENLTQQNMTLIDNVQKLMHKHVNQESKVSELKEVNGKLSLDLKNLRSSLNVAISDNDQILTQLAELSKNYDSLEQESAQLNSGLKSLEAEKQLLHTENEELHIRLDKLTGKLKIEESKSSDLGKKLTARQEEISNLKEENMSQSQAITSVKSKLDETLSKSSKLEADIEHLKNKVSEVEVERNALLASNERLMDDLKNNGENIASLQTEIEKKRAENDDLQSKLSVVSSEYENLLLISSQTNKSLEDKTNQLKYIEKNVQKLLDEKDQRNVELEELTSKYGKLGEENAQIKDELLALRKKSKKQHDLCANFVDDLKEKSDALEQLTNEKNELIVSLEQSNSNNEALVEERSDLANRLSDMKKSLSDSDNVISVIRSDLVRVNDELDTLKKDKDSLSTQYSEVCQDRDDLLDSLKGCEESFNKYAVSLRELCTKSEIDVPVSEILDDNFVFNAGNFSELSRLTVLSLENYLDAFNQVNFKKMELDNRLTTTDAEFTKVVADLEKLQHEHDDWLIQRGDLEKALKDSEKNFLRKEAEMTENIHSLEEGKEETKKEIAELSSRLEDNQLATNKLKNQLDHLNQEIRLKEDVLKEKESLIISLEESLSNQRQKESSLLDAKNELEHMLDDTSRKNSSLMEKIESINSSLDDKSFELASAVEKLGALQKLHSESLSLMENIKSQLQEAKEKIQVDESTIQELDHEITASKNNYEGKLNDKDSIIRDLSENIEQLNNLLAEEKSAVKRLSTEKESEILQFNSRLADLEYHKSQVESELGRSKLKLASTTEELQLAENERLSLTTRMLDLQNQVKDLSNIKDSLSEDLRTLRSLEDSVASLQKECKIKSNTVESLQDVLTSVQARNAELEDEVSRSVDKIRRRDDRCEHLSGKLKKLHSQLEEQHETFFRAEQQRMTQLGFLKETVKKQEKLLKKLNLRQEQLIPRSSILVYESYIRDIEKEIIVLQERLNGIELSQQLPKGYFGYFFKTNRVEMEVLDSFKQQVAKLQFLAGAEFIVKFKEDLEKCAAEEKEKQATFDNYSEKVENLGKSIEALYFALNREISFRKSLALSKSAYHNLLVRDSPKFNPDSQITYSIPVTNTKQSLLRSAILCVISLQRLRLLGQRHSFCEEVIENLSCV.

2 stretches are compositionally biased toward low complexity: residues 1-12 (MSNQSSSGSNTS) and 19-28 (ASSLVSSAAS). The segment at 1–102 (MSNQSSSGSN…STASSALPLT (102 aa)) is disordered. Basic and acidic residues predominate over residues 58-83 (SQHEDSSEELKRQEVRGMRRHSDLSI). Positions 90–102 (SEGSTASSALPLT) are enriched in polar residues. The residue at position 105 (Ser-105) is a Phosphoserine. Coiled coils occupy residues 199–785 (KQSE…FTSL), 804–1235 (VNMQ…DLLD), 1320–1471 (KVVA…SLDD), and 1481–1723 (EKLG…EQHE).

It belongs to the MPC70 family. In terms of assembly, monomer.

The protein localises to the cytoplasm. It is found in the cytoskeleton. Its subcellular location is the microtubule organizing center. The protein resides in the spindle pole body. Functionally, has a role in the initiation of spore membrane formation. In Schizosaccharomyces pombe (strain 972 / ATCC 24843) (Fission yeast), this protein is Sporulation-specific protein 15 (spo15).